An 87-amino-acid chain; its full sequence is UPF0250 protein ECA1299 (87 aa).

Belongs to the UPF0250 family.

This Pectobacterium atrosepticum (strain SCRI 1043 / ATCC BAA-672) (Erwinia carotovora subsp. atroseptica) protein is UPF0250 protein ECA1299.